The following is a 285-amino-acid chain: HTH-type transcriptional regulator MurR (285 aa).

One can recognise an HTH rpiR-type domain in the interval 1 to 77 (MLYLTKIRNA…MALIGEYSAS (77 aa)). The H-T-H motif DNA-binding region spans 37–56 (SRKMAKQLGISQSSIVKFAQ). In terms of domain architecture, SIS spans 128–268 (IIEVISKAPF…FVGLVQLNDV (141 aa)).

Homotetramer.

It functions in the pathway amino-sugar metabolism; N-acetylmuramate degradation [regulation]. Functionally, represses the expression of the murPQ operon involved in the uptake and degradation of N-acetylmuramic acid (MurNAc). Binds to two adjacent inverted repeats within the operator region. MurNAc 6-phosphate, the substrate of MurQ, is the specific inducer that weakens binding of MurR to the operator. The sequence is that of HTH-type transcriptional regulator MurR from Shigella sonnei (strain Ss046).